We begin with the raw amino-acid sequence, 239 residues long: 2,3,4,5-tetrahydropyridine-2,6-dicarboxylate N-acetyltransferase (239 aa).

It belongs to the transferase hexapeptide repeat family. DapH subfamily.

The enzyme catalyses (S)-2,3,4,5-tetrahydrodipicolinate + acetyl-CoA + H2O = L-2-acetamido-6-oxoheptanedioate + CoA. It functions in the pathway amino-acid biosynthesis; L-lysine biosynthesis via DAP pathway; LL-2,6-diaminopimelate from (S)-tetrahydrodipicolinate (acetylase route): step 1/3. In terms of biological role, catalyzes the transfer of an acetyl group from acetyl-CoA to tetrahydrodipicolinate. The sequence is that of 2,3,4,5-tetrahydropyridine-2,6-dicarboxylate N-acetyltransferase from Staphylococcus aureus (strain JH9).